Reading from the N-terminus, the 187-residue chain is Ion-translocating oxidoreductase complex subunit B (187 aa).

Residues 1–26 (MTHILFAVLVLALLALAFGIILGFAA) are hydrophobic. The 4Fe-4S domain maps to 32–90 (EADPIVDQLDALLPQTQCGQCGYPGCKPYAEALANGDQINKCVPGGDATMRKIADLMGV). Residues Cys-49, Cys-52, Cys-57, Cys-73, Cys-115, Cys-118, Cys-121, Cys-125, Cys-145, Cys-148, Cys-151, and Cys-155 each coordinate [4Fe-4S] cluster. 4Fe-4S ferredoxin-type domains are found at residues 106–135 (KVAF…GATK) and 136–165 (AMHT…MIPV).

The protein belongs to the 4Fe4S bacterial-type ferredoxin family. RnfB subfamily. In terms of assembly, the complex is composed of six subunits: RnfA, RnfB, RnfC, RnfD, RnfE and RnfG. The cofactor is [4Fe-4S] cluster.

The protein resides in the cell inner membrane. Part of a membrane-bound complex that couples electron transfer with translocation of ions across the membrane. The sequence is that of Ion-translocating oxidoreductase complex subunit B from Aeromonas hydrophila subsp. hydrophila (strain ATCC 7966 / DSM 30187 / BCRC 13018 / CCUG 14551 / JCM 1027 / KCTC 2358 / NCIMB 9240 / NCTC 8049).